The sequence spans 457 residues: Variant surface glycoprotein 20 (457 aa).

Positions Met1–Thr20 are cleaved as a signal peptide. Positions Arg385–Asn397 are enriched in polar residues. Positions Arg385–Glu406 are disordered. Asn436 carries an N-linked (GlcNAc...) asparagine glycan. Ser440 is lipidated: GPI-anchor amidated serine. A propeptide spans Asn441–Phe457 (removed in mature form).

Its subcellular location is the cell membrane. Its function is as follows. VSG forms a coat on the surface of the parasite. The trypanosome evades the immune response of the host by expressing a series of antigenically distinct VSGs from an estimated 1000 VSG genes. The chain is Variant surface glycoprotein 20 from Trypanosoma equiperdum.